The following is a 550-amino-acid chain: CTP synthase (550 aa).

Positions 1–277 (MNGSADAGPR…GRAVERALGL (277 aa)) are amidoligase domain. S23 is a binding site for CTP. Position 23 (S23) interacts with UTP. 24-29 (SLGKGI) contributes to the ATP binding site. Y64 is an L-glutamine binding site. ATP is bound at residue D81. D81 and E151 together coordinate Mg(2+). CTP is bound by residues 158–160 (DIE), 198–203 (KTKPTQ), and K234. UTP is bound by residues 198-203 (KTKPTQ) and K234. Position 252 (V252) interacts with ATP. Positions 302 to 549 (KIAIAGKYVK…VEAALAYQER (248 aa)) constitute a Glutamine amidotransferase type-1 domain. G364 serves as a coordination point for L-glutamine. Residue C391 is the Nucleophile; for glutamine hydrolysis of the active site. L-glutamine is bound by residues 392–395 (LGLQ), E415, and R472. Catalysis depends on residues H522 and E524.

This sequence belongs to the CTP synthase family. Homotetramer in the presence of UTP and ATP. Is in a protein concentration-dependent equilibrium between monomer, dimer, and tetramer in the absence of UTP and ATP.

It carries out the reaction UTP + L-glutamine + ATP + H2O = CTP + L-glutamate + ADP + phosphate + 2 H(+). The enzyme catalyses L-glutamine + H2O = L-glutamate + NH4(+). It catalyses the reaction UTP + NH4(+) + ATP = CTP + ADP + phosphate + 2 H(+). It participates in pyrimidine metabolism; CTP biosynthesis via de novo pathway; CTP from UDP: step 2/2. Its activity is regulated as follows. Allosterically activated by GTP, when glutamine is the substrate. GTP has no effect on the reaction when ammonia is the substrate. The allosteric effector GTP functions by stabilizing the protein conformation that binds the tetrahedral intermediate(s) formed during glutamine hydrolysis. Inhibited by the product CTP, via allosteric rather than competitive inhibition. Functionally, catalyzes the ATP-dependent amination of UTP to CTP with either L-glutamine or ammonia as the source of nitrogen. Regulates intracellular CTP levels through interactions with the four ribonucleotide triphosphates. This is CTP synthase from Thermus thermophilus (strain ATCC 27634 / DSM 579 / HB8).